The primary structure comprises 394 residues: Chalcone synthase 8 (394 aa).

Cysteine 165 is an active-site residue.

It belongs to the thiolase-like superfamily. Chalcone/stilbene synthases family.

The catalysed reaction is (E)-4-coumaroyl-CoA + 3 malonyl-CoA + 3 H(+) = 2',4,4',6'-tetrahydroxychalcone + 3 CO2 + 4 CoA. The protein operates within secondary metabolite biosynthesis; flavonoid biosynthesis. The primary product of this enzyme is 4,2',4',6'-tetrahydroxychalcone (also termed naringenin-chalcone or chalcone) which can under specific conditions spontaneously isomerize into naringenin. The polypeptide is Chalcone synthase 8 (CHS8) (Bromheadia finlaysoniana (Orchid)).